The sequence spans 96 residues: Large ribosomal subunit protein uL23 (96 aa).

It belongs to the universal ribosomal protein uL23 family. Part of the 50S ribosomal subunit. Contacts protein L29, and trigger factor when it is bound to the ribosome.

Its function is as follows. One of the early assembly proteins it binds 23S rRNA. One of the proteins that surrounds the polypeptide exit tunnel on the outside of the ribosome. Forms the main docking site for trigger factor binding to the ribosome. The chain is Large ribosomal subunit protein uL23 from Halalkalibacterium halodurans (strain ATCC BAA-125 / DSM 18197 / FERM 7344 / JCM 9153 / C-125) (Bacillus halodurans).